A 707-amino-acid polypeptide reads, in one-letter code: UvrABC system protein C (707 aa).

One can recognise a GIY-YIG domain in the interval 14 to 94 (AEPGCYLMKD…IKKHRPRFNV (81 aa)). Positions 206 to 241 (GELVERLRGRMAGAAEGLRFEEAARLRDQLQAVERS) constitute a UVR domain. The tract at residues 654 to 684 (PDAPPAAADEPSGAPEGTPAGGPAEAIPDAA) is disordered. The segment covering 658 to 684 (PAAADEPSGAPEGTPAGGPAEAIPDAA) has biased composition (low complexity).

This sequence belongs to the UvrC family. Interacts with UvrB in an incision complex.

It localises to the cytoplasm. Its function is as follows. The UvrABC repair system catalyzes the recognition and processing of DNA lesions. UvrC both incises the 5' and 3' sides of the lesion. The N-terminal half is responsible for the 3' incision and the C-terminal half is responsible for the 5' incision. The sequence is that of UvrABC system protein C from Anaeromyxobacter dehalogenans (strain 2CP-C).